A 155-amino-acid polypeptide reads, in one-letter code: Small ribosomal subunit protein uS7cz/uS7cy (155 aa).

The protein belongs to the universal ribosomal protein uS7 family. As to quaternary structure, part of the 30S ribosomal subunit.

The protein localises to the plastid. It localises to the chloroplast. Its function is as follows. One of the primary rRNA binding proteins, it binds directly to 16S rRNA where it nucleates assembly of the head domain of the 30S subunit. This Daucus carota (Wild carrot) protein is Small ribosomal subunit protein uS7cz/uS7cy (rps7-A).